Here is an 860-residue protein sequence, read N- to C-terminus: Glucans biosynthesis glucosyltransferase H (860 aa).

A run of 6 helical transmembrane segments spans residues 141-161 (FILLLLMLAQTSVATYYMKGI), 187-207 (VLPYVIQFGILALFAILFCWV), 515-535 (VFLTGVMSYLSAPLWFFFLVL), 572-592 (LFSTTLTLLFLPKLLSVMLIW), 599-619 (FGGVIRVTLSMLLEMFFSVLL), and 682-702 (FLWWLSPIVGSLMLSIPVSVI).

This sequence belongs to the glycosyltransferase 2 family. OpgH subfamily.

The protein localises to the cell inner membrane. The protein operates within glycan metabolism; osmoregulated periplasmic glucan (OPG) biosynthesis. Involved in the biosynthesis of osmoregulated periplasmic glucans (OPGs). The sequence is that of Glucans biosynthesis glucosyltransferase H from Pseudomonas paraeruginosa (strain DSM 24068 / PA7) (Pseudomonas aeruginosa (strain PA7)).